Here is a 235-residue protein sequence, read N- to C-terminus: Riboflavin kinase (235 aa).

Residues Thr-45 and Asn-47 each contribute to the Mg(2+) site. Glu-140 acts as the Nucleophile in catalysis.

Belongs to the flavokinase family. Zn(2+) serves as cofactor. Requires Mg(2+) as cofactor.

The catalysed reaction is riboflavin + ATP = FMN + ADP + H(+). Its pathway is cofactor biosynthesis; FMN biosynthesis; FMN from riboflavin (ATP route): step 1/1. In terms of biological role, catalyzes the phosphorylation of riboflavin (vitamin B2) to form flavin mononucleotide (FMN) coenzyme. This is Riboflavin kinase (FMN1) from Chaetomium globosum (strain ATCC 6205 / CBS 148.51 / DSM 1962 / NBRC 6347 / NRRL 1970) (Soil fungus).